A 640-amino-acid chain; its full sequence is ATP-dependent rRNA helicase spb4 (640 aa).

A Q motif motif is present at residues 14-42 (WDAVTPALSEWVLEAMSSMGFTRMTPVQA). In terms of domain architecture, Helicase ATP-binding spans 45–249 (IPLFMAHKDV…RVGLRNPVKV (205 aa)). Position 58-65 (58-65 (AVTGSGKT)) interacts with ATP. The DEAD box signature appears at 197-200 (DEAD). The 155-residue stretch at 283-437 (ALKRIVSSVQ…SISFSDADAA (155 aa)) folds into the Helicase C-terminal domain. Positions 521 to 629 (AYKDKQREKR…VAKAAGAKAD (109 aa)) form a coiled coil. 2 disordered regions span residues 531 to 593 (RKEL…EEEK) and 607 to 640 (RKKNEEERRLRRAVAKAAGAKADGDDEEEFQGFD). Residues 577-593 (KSKQEKARWEKMTEEEK) show a composition bias toward basic and acidic residues. A compositionally biased stretch (acidic residues) spans 630–640 (GDDEEEFQGFD).

It belongs to the DEAD box helicase family. DDX55/SPB4 subfamily. As to quaternary structure, component of pre-60S ribosomal complexes.

The protein localises to the nucleus. Its subcellular location is the nucleolus. The enzyme catalyses ATP + H2O = ADP + phosphate + H(+). Functionally, ATP-binding RNA helicase involved in the biogenesis of 60S ribosomal subunits. Binds 90S pre-ribosomal particles and dissociates from pre-60S ribosomal particles after processing of 27SB pre-rRNA. Required for the normal formation of 18S rRNA through the processing of pre-rRNAs at sites A0, A1 and A2, and the normal formation of 25S and 5.8S rRNAs through the processing of pre-rRNAs at sites C1 and C2. The protein is ATP-dependent rRNA helicase spb4 of Aspergillus fumigatus (strain ATCC MYA-4609 / CBS 101355 / FGSC A1100 / Af293) (Neosartorya fumigata).